The primary structure comprises 324 residues: Glyoxylate/hydroxypyruvate reductase B (324 aa).

Active-site residues include Arg237 and Glu266. Catalysis depends on His285, which acts as the Proton donor.

The protein belongs to the D-isomer specific 2-hydroxyacid dehydrogenase family. GhrB subfamily. Homodimer.

The protein localises to the cytoplasm. The enzyme catalyses glycolate + NADP(+) = glyoxylate + NADPH + H(+). It carries out the reaction (R)-glycerate + NAD(+) = 3-hydroxypyruvate + NADH + H(+). The catalysed reaction is (R)-glycerate + NADP(+) = 3-hydroxypyruvate + NADPH + H(+). Catalyzes the NADPH-dependent reduction of glyoxylate and hydroxypyruvate into glycolate and glycerate, respectively. In Shigella sonnei (strain Ss046), this protein is Glyoxylate/hydroxypyruvate reductase B.